The chain runs to 421 residues: MTVKYNQNGELTMDGISLKTIAQSFGTPTIVYDELQIREQMRRYHRAFKDSGLKYNISYASKAFTCIQMVKLVAEEDLQLDVVSEGELYTALEAGFEPSRIHFHGNNKTKHEIRYALENNIGYFVIDSLEEIELIDRYANDTVQVVLRVNPGVEAHTHEFIQTGQEDSKFGLSIQYGLAKKAIDKVQQSKHLKLKGVHCHIGSQIEGTEAFIETAKIVLRWLKEQGIQVELLNLGGGFGIKYVEGDESFPIESGIKDITDAIKSEIKVLGIDAPEIGIEPGRSIVGEAGVTLYEVGTIKEIPEINKYVSIDGGMSDHIRTALYDAKYQALLVNRNEEADDSVTIAGKLCESGDIIIKDAKLPSSVKRGDYLAILSTGAYHYSMASNYNQMQKPSVFFLKDGKAREVIKRQSLRQLIINDTK.

Lysine 62 bears the N6-(pyridoxal phosphate)lysine mark. Pyridoxal 5'-phosphate-binding positions include glycine 237 and 279–282; that span reads EPGR. Residues arginine 282, arginine 319, and tyrosine 323 each coordinate substrate. The active-site Proton donor is cysteine 349. 2 residues coordinate substrate: glutamate 350 and tyrosine 379. Tyrosine 379 lines the pyridoxal 5'-phosphate pocket.

It belongs to the Orn/Lys/Arg decarboxylase class-II family. LysA subfamily. As to quaternary structure, homodimer. Pyridoxal 5'-phosphate serves as cofactor.

The enzyme catalyses meso-2,6-diaminopimelate + H(+) = L-lysine + CO2. It participates in amino-acid biosynthesis; L-lysine biosynthesis via DAP pathway; L-lysine from DL-2,6-diaminopimelate: step 1/1. Functionally, specifically catalyzes the decarboxylation of meso-diaminopimelate (meso-DAP) to L-lysine. Plays a role in beta-lactam antibiotic resistance. This chain is Diaminopimelate decarboxylase (lysA), found in Staphylococcus aureus (strain COL).